Reading from the N-terminus, the 173-residue chain is Soluble secreted antigen MPT53 (173 aa).

Positions 1–38 (MSLRLVSPIKAFADGIVAVAIAVVLMFGLANTPRAVAA) are cleaved as a signal peptide. Cys73 and Cys76 are disulfide-bonded.

The protein belongs to the thioredoxin family.

It is found in the secreted. Functionally, disulfide oxidoreductase that catalyzes the oxidation of reduced, unfolded secreted proteins to form disulfide bonds. Despite a weak homology to thioredoxin this cannot serve as a substrate for thioredoxin reductase. This chain is Soluble secreted antigen MPT53 (mpt53), found in Mycobacterium bovis (strain ATCC BAA-935 / AF2122/97).